Reading from the N-terminus, the 850-residue chain is Mitochondrial escape protein 2 (850 aa).

The N-terminal 44 residues, 1-44, are a transit peptide targeting the mitochondrion; it reads MLLVRTTSLNVSRMPVPCLARGIGILKGKYRLANLMNAQPSVRH. The tract at residues 44–66 is disordered; sequence HVSSEIQQKDQQAGESNTATDTG. Residues 45-287 are Mitochondrial matrix-facing; the sequence is VSSEIQQKDQ…VSNFFTNHTR (243 aa). The span at 47–64 shows a compositional bias: polar residues; the sequence is SEIQQKDQQAGESNTATD. The 75-residue stretch at 198-272 folds into the RRM domain; it reads TTIVIKFQGP…TVLHIQYENI (75 aa). A helical membrane pass occupies residues 288–308; that stretch reads IAIPVLFALLSIFAVLVFDPI. At 309 to 850 the chain is on the mitochondrial intermembrane side; that stretch reads REFSIEQKIT…CEEEIKNLSK (542 aa). Basic and acidic residues predominate over residues 607-621; the sequence is KGENVKEPESEKETA. The tract at residues 607–633 is disordered; sequence KGENVKEPESEKETAENNDSDSEADTS.

The protein belongs to the YME2 family.

It localises to the mitochondrion inner membrane. In terms of biological role, plays a role in maintaining the mitochondrial genome and in controlling the mtDNA escape. Involved in the regulation of mtDNA nucleotide structure and number. May have a dispensable role in early maturation of pre-rRNA. The sequence is that of Mitochondrial escape protein 2 (YME2) from Saccharomyces cerevisiae (strain ATCC 204508 / S288c) (Baker's yeast).